The primary structure comprises 600 residues: MSIKPPSISLLPVSPEQLVRLQSEIGDFSPTQLAWLSGYFWGMVNQQPQVQAVVPAVPAQETITLISASQTGNARRLAEQLREDLLAQKLNVNLFNAGDYKFKQIAQEKILIIIASTQGEGEPAEEAVALYKYLYSKKVPKLNDTVFAVFGLGDTSYERFCQAGKDFDNRLNELGAQRLLERVDGDVEYQQVADQWRKQLTGILKQRIPTETGTEITSAQDRSVNEVFSTSYTKQAPLTAALATCQKITGRGSDKDVRHIEIDLGDSGLRYQPGDALGVWFENDPELVDEVLNLLWLQGTEQVEVNGQKLSLREALISHVELTQNTSVIVEKYAVLAKDEKLLSLIADKQALQQYAHNKPIADMIREAASQPEAQQFIDLLRPLTPRLYSISSSQAEMENEVHLTVGVVRYEIDGRARTGGASGYLADRLQENSDIRIFIEHNDNFRLPADPRTPVIMIGPGTGIAPFRAFMQQREADGAEGKNWLFFGNPHFTEDFLYQVEWQRYVKDGLLTRIDLAWSRDQQHKIYVQDKLREQGEAVWCWIKEGAHLYVCGDANRMAKDVEHALLDIIAEHGGMDTEQADEFLSELRFERRYQRDVY.

Residues 63–201 enclose the Flavodoxin-like domain; sequence ITLISASQTG…VADQWRKQLT (139 aa). Residues 69-74, 116-119, and 152-161 contribute to the FMN site; these read SQTGNA, STQG, and LGDTSYERFC. One can recognise an FAD-binding FR-type domain in the interval 235–449; it reads QAPLTAALAT…IEHNDNFRLP (215 aa). FAD is bound by residues Thr-323, His-357, 387 to 390, 405 to 407, Tyr-411, and 420 to 423; these read RLYS, TVG, and GGAS. Residues 520-521, 526-530, and Asp-562 contribute to the NADP(+) site; these read SR and KIYVQ. An FAD-binding site is contributed by Tyr-600.

Belongs to the NADPH-dependent sulphite reductase flavoprotein subunit CysJ family. It in the N-terminal section; belongs to the flavodoxin family. The protein in the C-terminal section; belongs to the flavoprotein pyridine nucleotide cytochrome reductase family. As to quaternary structure, alpha(8)-beta(8). The alpha component is a flavoprotein, the beta component is a hemoprotein. FAD is required as a cofactor. The cofactor is FMN.

The catalysed reaction is hydrogen sulfide + 3 NADP(+) + 3 H2O = sulfite + 3 NADPH + 4 H(+). The protein operates within sulfur metabolism; hydrogen sulfide biosynthesis; hydrogen sulfide from sulfite (NADPH route): step 1/1. Its function is as follows. Component of the sulfite reductase complex that catalyzes the 6-electron reduction of sulfite to sulfide. This is one of several activities required for the biosynthesis of L-cysteine from sulfate. The flavoprotein component catalyzes the electron flow from NADPH -&gt; FAD -&gt; FMN to the hemoprotein component. This is Sulfite reductase [NADPH] flavoprotein alpha-component from Photorhabdus laumondii subsp. laumondii (strain DSM 15139 / CIP 105565 / TT01) (Photorhabdus luminescens subsp. laumondii).